Consider the following 472-residue polypeptide: Ribosomal RNA small subunit methyltransferase F (472 aa).

S-adenosyl-L-methionine is bound by residues 123–129, E147, D174, and D192; that span reads AAAPGSK. Residue C245 is the Nucleophile of the active site.

The protein belongs to the class I-like SAM-binding methyltransferase superfamily. RsmB/NOP family.

Its subcellular location is the cytoplasm. It carries out the reaction cytidine(1407) in 16S rRNA + S-adenosyl-L-methionine = 5-methylcytidine(1407) in 16S rRNA + S-adenosyl-L-homocysteine + H(+). Specifically methylates the cytosine at position 1407 (m5C1407) of 16S rRNA. This Vibrio vulnificus (strain CMCP6) protein is Ribosomal RNA small subunit methyltransferase F.